We begin with the raw amino-acid sequence, 889 residues long: Mixed-linked glucan synthase 2 (889 aa).

The segment at 34 to 53 (AGADGQNGRRSPVAKRVNDG) is disordered. Transmembrane regions (helical) follow at residues 93-113 (ILHP…AFFA) and 123-143 (GVWL…SWVL). Aspartate 213 is an active-site residue. The stretch at 265–293 (ELMSDHRRVRREYEEFKVRIDSLSSTIRQ) forms a coiled coil. The substrate site is built by aspartate 411 and aspartate 413. Aspartate 579 is an active-site residue. 6 helical membrane passes run 655 to 675 (TYPI…MWLI), 685 to 705 (FGEY…IGMF), 723 to 743 (FYMI…ALKL), 777 to 797 (LLIP…VAVG), 811 to 831 (LAVL…PFAL), and 842 to 862 (AVLF…YVAF).

Belongs to the glycosyltransferase 2 family. Plant cellulose synthase-like F subfamily.

The protein localises to the golgi apparatus membrane. Its function is as follows. Catalyzes both beta-1,3 and beta-1,4 glycosidic linkage on beta-D-glucan. Essential for (1,3;1,4)-beta-D-glucans synthesis in grasses and cereals (Poaceae). The mixed-linked glucans (which are not present in walls of dicotyledons or most other monocotyledonous plants) are particularly important constituents of the walls of the starchy endosperm and aleurone cells of cereal grains such as oats, wheat, rice and barley. They can account for up to 70% by weight of the wall. This Oryza sativa subsp. japonica (Rice) protein is Mixed-linked glucan synthase 2 (CSLF2).